A 455-amino-acid chain; its full sequence is Growth/differentiation factor 9 (455 aa).

Residues 1-24 form the signal peptide; that stretch reads MALPNKFLLWFYCFAWLCFPVSLG. The propeptide occupies 25–320; that stretch reads SQASGGDAQI…GRSSHHRHRR (296 aa). 5 N-linked (GlcNAc...) asparagine glycosylation sites follow: asparagine 106, asparagine 163, asparagine 236, asparagine 255, and asparagine 269. Positions 305–328 are disordered; that stretch reads EDAAEDGRSSHHRHRRGQETVSSE. The N-linked (GlcNAc...) asparagine glycan is linked to asparagine 339. Disulfide bonds link cysteine 354-cysteine 420, cysteine 383-cysteine 452, and cysteine 387-cysteine 454.

It belongs to the TGF-beta family. Homodimer or heterodimer (Potential). But, in contrast to other members of this family, cannot be disulfide-linked. Post-translationally, phosphorylated; phosphorylation is critical for GDF9 function.

Its subcellular location is the secreted. In terms of biological role, required for ovarian folliculogenesis. This chain is Growth/differentiation factor 9 (GDF9), found in Papio anubis (Olive baboon).